A 113-amino-acid polypeptide reads, in one-letter code: uncharacterized protein (113 aa).

This is an uncharacterized protein from Bacillus subtilis (strain 168).